The following is a 331-amino-acid chain: MGQTRVAATTAAQSPAAELSPETNGQTEEPLQLLGEDSWEEFSIAVPWGTVEAKWWGSKERQPIIALHGWQDNCGSFDRLCPLLPADTSILAIDLPGHGKSSHYPMGMQYFIFWDGICLIRRIVRKYNWKNVTLLGHSLGGALTFMYAASFPTEVEKLINIDIAGPTVRGTQRMAEGTGRALDKFLDYETLPESKQPCYSYDEMIKLVLDAYDGSVDEPSVRVLMNRGMRHNPSKNGYLFARDLRLKVSLLGMFTAEQTLAYARQIRCRVLNIRGIPGMKFETPQVYADVIATLRENAAKVVYVEVPGTHHLHLVTPDRVAPHIIRFLKEA.

Residues 1 to 28 (MGQTRVAATTAAQSPAAELSPETNGQTE) are disordered. Positions 7–17 (AATTAAQSPAA) are enriched in low complexity. Positions 63-163 (PIIALHGWQD…EVEKLINIDI (101 aa)) constitute an AB hydrolase-1 domain. The active site involves Ser138.

It belongs to the AB hydrolase superfamily. Ubiquitously expressed before embryonic stage 11. At stage 11, expression is concentrated in the foregut and posterior midgut. By stage 15, in gastric caeca, pharynx, posterior spiracles and anterior edge of midgut. At the end of embryogenesis, expression is confined to gastric caeca. During third instar larvae, expressed at low levels in gastric caeca, midgut and hindgut and high level in fat body.

In terms of biological role, may have a role in detoxification and digestion during embryogenesis and larval development. In Drosophila melanogaster (Fruit fly), this protein is Probable serine hydrolase (kraken).